The sequence spans 148 residues: SsrA-binding protein (148 aa).

Residues Ala119 to Gly148 are disordered. A compositionally biased stretch (basic and acidic residues) spans Asp126–Arg142.

The protein belongs to the SmpB family.

The protein resides in the cytoplasm. Functionally, required for rescue of stalled ribosomes mediated by trans-translation. Binds to transfer-messenger RNA (tmRNA), required for stable association of tmRNA with ribosomes. tmRNA and SmpB together mimic tRNA shape, replacing the anticodon stem-loop with SmpB. tmRNA is encoded by the ssrA gene; the 2 termini fold to resemble tRNA(Ala) and it encodes a 'tag peptide', a short internal open reading frame. During trans-translation Ala-aminoacylated tmRNA acts like a tRNA, entering the A-site of stalled ribosomes, displacing the stalled mRNA. The ribosome then switches to translate the ORF on the tmRNA; the nascent peptide is terminated with the 'tag peptide' encoded by the tmRNA and targeted for degradation. The ribosome is freed to recommence translation, which seems to be the essential function of trans-translation. This Paraburkholderia xenovorans (strain LB400) protein is SsrA-binding protein.